A 479-amino-acid polypeptide reads, in one-letter code: Glutathione gamma-glutamylcysteinyltransferase 3 (479 aa).

A Peptidase C83 domain is found at M1–R221. Residues C56, H162, and D180 contribute to the active site.

Belongs to the phytochelatin synthase family. In terms of tissue distribution, expressed in roots, nodules and leaves.

It catalyses the reaction [Glu(-Cys)](n)-Gly + glutathione + H(+) = [Glu(-Cys)](n+1)-Gly + glycine. Its activity is regulated as follows. Requires cadmium for activity. In terms of biological role, involved in the synthesis of phytochelatins (PC) and homophytochelatins (hPC), the heavy-metal-binding peptides of plants. In Lotus japonicus (Lotus corniculatus var. japonicus), this protein is Glutathione gamma-glutamylcysteinyltransferase 3 (PCS3).